A 430-amino-acid polypeptide reads, in one-letter code: Serine--tRNA ligase (430 aa).

L-serine is bound at residue 237 to 239; it reads TAE. 268–270 serves as a coordination point for ATP; sequence RSE. L-serine is bound at residue Glu-291. 355 to 358 is a binding site for ATP; the sequence is EISS. Ser-391 contacts L-serine.

It belongs to the class-II aminoacyl-tRNA synthetase family. Type-1 seryl-tRNA synthetase subfamily. As to quaternary structure, homodimer. The tRNA molecule binds across the dimer.

It is found in the cytoplasm. It catalyses the reaction tRNA(Ser) + L-serine + ATP = L-seryl-tRNA(Ser) + AMP + diphosphate + H(+). It carries out the reaction tRNA(Sec) + L-serine + ATP = L-seryl-tRNA(Sec) + AMP + diphosphate + H(+). The protein operates within aminoacyl-tRNA biosynthesis; selenocysteinyl-tRNA(Sec) biosynthesis; L-seryl-tRNA(Sec) from L-serine and tRNA(Sec): step 1/1. Functionally, catalyzes the attachment of serine to tRNA(Ser). Is also able to aminoacylate tRNA(Sec) with serine, to form the misacylated tRNA L-seryl-tRNA(Sec), which will be further converted into selenocysteinyl-tRNA(Sec). This is Serine--tRNA ligase from Klebsiella pneumoniae (strain 342).